A 147-amino-acid chain; its full sequence is Probable flagellum biosynthesis repressor protein FlbT (147 aa).

The protein belongs to the FlbT family.

Functionally, has a post-transcriptional repressor function in flagellum biogenesis. Associates with the 5'-UTR of fljK mRNA and promotes its degradation. This Mesorhizobium japonicum (strain LMG 29417 / CECT 9101 / MAFF 303099) (Mesorhizobium loti (strain MAFF 303099)) protein is Probable flagellum biosynthesis repressor protein FlbT.